The chain runs to 360 residues: Mitogen-activated protein kinase 14 (360 aa).

At S2 the chain carries N-acetylserine. Position 2 is a phosphoserine (S2). T16 bears the Phosphothreonine mark. One can recognise a Protein kinase domain in the interval 24 to 308 (YQNLSPVGSG…AAQALAHAYF (285 aa)). ATP-binding positions include 30 to 38 (VGSGAYGSV) and K53. N6-acetyllysine is present on K53. The Proton acceptor role is filled by D150. The residue at position 152 (K152) is an N6-acetyllysine. A Phosphothreonine modification is found at T180. The TXY signature appears at 180-182 (TGY). Phosphotyrosine is present on Y182. A Phosphotyrosine; by ZAP70 modification is found at Y323.

The protein belongs to the protein kinase superfamily. CMGC Ser/Thr protein kinase family. MAP kinase subfamily. In terms of assembly, component of a signaling complex containing at least AKAP13, PKN1, MAPK14, ZAK and MAP2K3. Within this complex, AKAP13 interacts directly with PKN1, which in turn recruits MAPK14, MAP2K3 and ZAK. Binds to a kinase interaction motif within the protein tyrosine phosphatase, PTPRR. This interaction retains MAPK14 in the cytoplasm and prevents nuclear accumulation. Interacts with SPAG9 and GADD45A. Interacts with CDC25B, CDC25C, DUSP1, DUSP10, DUSP16, NP60, SUPT20H and TAB1. Interacts with casein kinase II subunits CSNK2A1 and CSNK2B. Interacts with PPM1D. Interacts with CDK5RAP3; recruits PPM1D to MAPK14 and may regulate its dephosphorylation. Interacts with DUSP2; this interaction does not lead to catalytic activation of DUSP2 and dephosphrylation of MAPK14. It depends on Mg(2+) as a cofactor. Dually phosphorylated on Thr-180 and Tyr-182 by the MAP2Ks MAP2K3/MKK3, MAP2K4/MKK4 and MAP2K6/MKK6 in response to inflammatory cytokines, environmental stress or growth factors, which activates the enzyme. Dual phosphorylation can also be mediated by TAB1-mediated autophosphorylation. TCR engagement in T-cells also leads to Tyr-323 phosphorylation by ZAP70. Dephosphorylated and inactivated by DUPS1, DUSP10 and DUSP16. PPM1D also mediates dephosphorylation and inactivation of MAPK14. Post-translationally, acetylated at Lys-53 and Lys-152 by KAT2B and EP300. Acetylation at Lys-53 increases the affinity for ATP and enhances kinase activity. Lys-53 and Lys-152 are deacetylated by HDAC3. In terms of processing, ubiquitinated. Ubiquitination leads to degradation by the proteasome pathway.

It is found in the cytoplasm. It localises to the nucleus. The enzyme catalyses L-seryl-[protein] + ATP = O-phospho-L-seryl-[protein] + ADP + H(+). It carries out the reaction L-threonyl-[protein] + ATP = O-phospho-L-threonyl-[protein] + ADP + H(+). Activated by cell stresses such as DNA damage, heat shock, osmotic shock, anisomycin and sodium arsenite, as well as pro-inflammatory stimuli such as bacterial lipopolysaccharide (LPS) and interleukin-1. Activation occurs through dual phosphorylation of Thr-180 and Tyr-182 by either of two dual specificity kinases, MAP2K3/MKK3 or MAP2K6/MKK6, and potentially also MAP2K4/MKK4, as well as by TAB1-mediated autophosphorylation. MAPK14 phosphorylated on both Thr-180 and Tyr-182 is 10-20-fold more active than MAPK14 phosphorylated only on Thr-180, whereas MAPK14 phosphorylated on Tyr-182 alone is inactive. whereas Thr-180 is necessary for catalysis, Tyr-182 may be required for auto-activation and substrate recognition. Phosphorylated at Tyr-323 by ZAP70 in an alternative activation pathway in response to TCR signaling in T-cells. This alternative pathway is inhibited by GADD45A. Inhibited by dual specificity phosphatases, such as DUSP1, DUSP10, and DUSP16. Specifically inhibited by the binding of pyridinyl-imidazole compounds, which are cytokine-suppressive anti-inflammatory drugs (CSAID). SB203580 is an inhibitor of MAPK14. Serine/threonine kinase which acts as an essential component of the MAP kinase signal transduction pathway. MAPK14 is one of the four p38 MAPKs which play an important role in the cascades of cellular responses evoked by extracellular stimuli such as pro-inflammatory cytokines or physical stress leading to direct activation of transcription factors. Accordingly, p38 MAPKs phosphorylate a broad range of proteins and it has been estimated that they may have approximately 200 to 300 substrates each. Some of the targets are downstream kinases which are activated through phosphorylation and further phosphorylate additional targets. RPS6KA5/MSK1 and RPS6KA4/MSK2 can directly phosphorylate and activate transcription factors such as CREB1, ATF1, the NF-kappa-B isoform RELA/NFKB3, STAT1 and STAT3, but can also phosphorylate histone H3 and the nucleosomal protein HMGN1. RPS6KA5/MSK1 and RPS6KA4/MSK2 play important roles in the rapid induction of immediate-early genes in response to stress or mitogenic stimuli, either by inducing chromatin remodeling or by recruiting the transcription machinery. On the other hand, two other kinase targets, MAPKAPK2/MK2 and MAPKAPK3/MK3, participate in the control of gene expression mostly at the post-transcriptional level, by phosphorylating ZFP36 (tristetraprolin) and ELAVL1, and by regulating EEF2K, which is important for the elongation of mRNA during translation. MKNK1/MNK1 and MKNK2/MNK2, two other kinases activated by p38 MAPKs, regulate protein synthesis by phosphorylating the initiation factor EIF4E2. MAPK14 also interacts with casein kinase II, leading to its activation through autophosphorylation and further phosphorylation of TP53/p53. In the cytoplasm, the p38 MAPK pathway is an important regulator of protein turnover. For example, CFLAR is an inhibitor of TNF-induced apoptosis whose proteasome-mediated degradation is regulated by p38 MAPK phosphorylation. In a similar way, MAPK14 phosphorylates the ubiquitin ligase SIAH2, regulating its activity towards EGLN3. MAPK14 may also inhibit the lysosomal degradation pathway of autophagy by interfering with the intracellular trafficking of the transmembrane protein ATG9. Another function of MAPK14 is to regulate the endocytosis of membrane receptors by different mechanisms that impinge on the small GTPase RAB5A. In addition, clathrin-mediated EGFR internalization induced by inflammatory cytokines and UV irradiation depends on MAPK14-mediated phosphorylation of EGFR itself as well as of RAB5A effectors. Ectodomain shedding of transmembrane proteins is regulated by p38 MAPKs as well. In response to inflammatory stimuli, p38 MAPKs phosphorylate the membrane-associated metalloprotease ADAM17. Such phosphorylation is required for ADAM17-mediated ectodomain shedding of TGF-alpha family ligands, which results in the activation of EGFR signaling and cell proliferation. Another p38 MAPK substrate is FGFR1. FGFR1 can be translocated from the extracellular space into the cytosol and nucleus of target cells, and regulates processes such as rRNA synthesis and cell growth. FGFR1 translocation requires p38 MAPK activation. In the nucleus, many transcription factors are phosphorylated and activated by p38 MAPKs in response to different stimuli. Classical examples include ATF1, ATF2, ATF6, ELK1, PTPRH, DDIT3, TP53/p53 and MEF2C and MEF2A. The p38 MAPKs are emerging as important modulators of gene expression by regulating chromatin modifiers and remodelers. The promoters of several genes involved in the inflammatory response, such as IL6, IL8 and IL12B, display a p38 MAPK-dependent enrichment of histone H3 phosphorylation on 'Ser-10' (H3S10ph) in LPS-stimulated myeloid cells. This phosphorylation enhances the accessibility of the cryptic NF-kappa-B-binding sites marking promoters for increased NF-kappa-B recruitment. Phosphorylates CDC25B and CDC25C which is required for binding to 14-3-3 proteins and leads to initiation of a G2 delay after ultraviolet radiation. Phosphorylates TIAR following DNA damage, releasing TIAR from GADD45A mRNA and preventing mRNA degradation. The p38 MAPKs may also have kinase-independent roles, which are thought to be due to the binding to targets in the absence of phosphorylation. Protein O-Glc-N-acylation catalyzed by the OGT is regulated by MAPK14, and, although OGT does not seem to be phosphorylated by MAPK14, their interaction increases upon MAPK14 activation induced by glucose deprivation. This interaction may regulate OGT activity by recruiting it to specific targets such as neurofilament H, stimulating its O-Glc-N-acylation. Required in mid-fetal development for the growth of embryo-derived blood vessels in the labyrinth layer of the placenta. Also plays an essential role in developmental and stress-induced erythropoiesis, through regulation of EPO gene expression. Phosphorylates S100A9 at 'Thr-113'. In Rattus norvegicus (Rat), this protein is Mitogen-activated protein kinase 14.